The following is a 432-amino-acid chain: Homeobox protein Hox-D3 (432 aa).

Disordered regions lie at residues 43-62 (YSTP…LDTD), 68-197 (CSIQ…SKRV), 253-280 (QKAK…AGHV), and 400-432 (HHGP…LTHL). The segment covering 97 to 106 (NSQGGGGGSQ) has biased composition (gly residues). The segment covering 116 to 131 (PPQPPPPPPTLPPSSP) has biased composition (pro residues). Residues 148-158 (NASSSSATISK) show a composition bias toward polar residues. An Antp-type hexapeptide motif is present at residues 160-165 (IFPWMK). Positions 194-253 (SKRVRTAYTSAQLVELEKEFHFNRYLCRPRRVEMANLLNLTERQIKIWFQNRRMKYKKDQ) form a DNA-binding region, homeobox.

The protein belongs to the Antp homeobox family.

The protein localises to the nucleus. Functionally, sequence-specific transcription factor which is part of a developmental regulatory system that provides cells with specific positional identities on the anterior-posterior axis. This is Homeobox protein Hox-D3 (HOXD3) from Homo sapiens (Human).